The following is a 206-amino-acid chain: Thymidylate kinase (206 aa).

10–17 (GIDGAGKS) provides a ligand contact to ATP.

It belongs to the thymidylate kinase family.

It catalyses the reaction dTMP + ATP = dTDP + ADP. Functionally, phosphorylation of dTMP to form dTDP in both de novo and salvage pathways of dTTP synthesis. This Neisseria meningitidis serogroup B (strain ATCC BAA-335 / MC58) protein is Thymidylate kinase (tmk).